The primary structure comprises 317 residues: L-lactate dehydrogenase (317 aa).

NAD(+) contacts are provided by residues Val-16, Asp-37, Arg-42, Tyr-67, and Gly-81–Ala-82. Substrate-binding residues include Gln-84 and Arg-90. NAD(+) contacts are provided by residues Ser-103, Ala-120 to Asn-122, and Ser-145. Asn-122–Asp-125 lines the substrate pocket. Asp-150 to Arg-153 is a binding site for substrate. His-177 (proton acceptor) is an active-site residue. Position 221 is a phosphotyrosine (Tyr-221). Thr-230 contacts substrate.

It belongs to the LDH/MDH superfamily. LDH family. Homotetramer.

It is found in the cytoplasm. It carries out the reaction (S)-lactate + NAD(+) = pyruvate + NADH + H(+). Its pathway is fermentation; pyruvate fermentation to lactate; (S)-lactate from pyruvate: step 1/1. Catalyzes the conversion of lactate to pyruvate. The protein is L-lactate dehydrogenase of Limosilactobacillus fermentum (strain NBRC 3956 / LMG 18251) (Lactobacillus fermentum).